A 322-amino-acid chain; its full sequence is Sideroflexin-1 (322 aa).

An N-acetylserine modification is found at serine 2. Over 2–102 the chain is Mitochondrial matrix; sequence SGEVPPNINI…MSAQVPMNMT (101 aa). The chain crosses the membrane as a helical span at residues 103–120; that stretch reads ITGCMMTFYRTTPAVLFW. Over 121-146 the chain is Mitochondrial intermembrane; the sequence is QWINQSFNAVVNYTNRSGDAPLTVNE. The helical transmembrane segment at 147 to 167 threads the bilayer; sequence LGTAYVSATTGAVATALGLNA. At 168 to 174 the chain is on the mitochondrial matrix side; it reads LTKRVSP. Residues 175 to 195 traverse the membrane as a helical segment; that stretch reads LIGRFVPFAAVAAANCINIPL. Residues 196-228 are Mitochondrial intermembrane-facing; sequence MRQRELKVGIPVTDENGTRLGESTNAAKQAITQ. The chain crosses the membrane as a helical span at residues 229–249; the sequence is VVISRILMAAPGMAIPPFIMN. The Mitochondrial matrix portion of the chain corresponds to 250 to 266; that stretch reads TLEKKAFLKRFPWMSAP. A helical membrane pass occupies residues 267-287; it reads IQVTLVGFCLVFATPLCCALF. The Mitochondrial intermembrane portion of the chain corresponds to 288-322; sequence PQKSSMSVTSLEDELQASIQRTHPEIRRVYFNKGL.

This sequence belongs to the sideroflexin family. As to expression, widely expressed, with highest expression in kidney and liver.

The protein resides in the mitochondrion inner membrane. The enzyme catalyses L-serine(in) = L-serine(out). The catalysed reaction is L-alanine(in) = L-alanine(out). It carries out the reaction L-cysteine(in) = L-cysteine(out). Its function is as follows. Amino acid transporter importing serine, an essential substrate of the mitochondrial branch of the one-carbon pathway, into mitochondria. Mitochondrial serine is then converted to glycine and formate, which exits to the cytosol where it is used to generate the charged folates that serve as one-carbon donors. May also transport other amino acids including alanine and cysteine. This chain is Sideroflexin-1, found in Mus musculus (Mouse).